Here is a 340-residue protein sequence, read N- to C-terminus: Phosphoribosylformylglycinamidine cyclo-ligase (340 aa).

The protein belongs to the AIR synthase family.

It localises to the cytoplasm. The catalysed reaction is 2-formamido-N(1)-(5-O-phospho-beta-D-ribosyl)acetamidine + ATP = 5-amino-1-(5-phospho-beta-D-ribosyl)imidazole + ADP + phosphate + H(+). Its pathway is purine metabolism; IMP biosynthesis via de novo pathway; 5-amino-1-(5-phospho-D-ribosyl)imidazole from N(2)-formyl-N(1)-(5-phospho-D-ribosyl)glycinamide: step 2/2. The chain is Phosphoribosylformylglycinamidine cyclo-ligase from Streptococcus pneumoniae (strain CGSP14).